A 580-amino-acid polypeptide reads, in one-letter code: MIKHDSIRLLATNLLKDAIGRAYPDFSASEDDIYKALVNPPKSDLGDLAFGCFILAKALKTAPPQVATAVAAQMKGATAVAAGPYINIRFDEQTHGEQVLATILDGSYFKKPLMEKSPKTMIEYSQPNTHKELHVGHMRNLCLGDAIVRMLRYSGREIVSSTFPGDMGTHVAKCLWYMKKHNQEPVPETEKGEWLGRMYSKANLLLEDQNGTPQEDINRQELTAILHQLEGKTGPYYDLWLETREWSIELMKKVYAWADVTFDEWYFESEMDSPSAAWVKQLYAEGKLEMSQGAIGKDLESEKLGFCMLLKSDGTGLYATKDLLLAKHKFEDVKIEKSVYVVDMRQALHFKQVFRVLEILGFEQAKNCFHLQYNYVELPDGAMSSRKGNIVPLRELVHRMEDHVKTTYLSRYKGEWSEEDVEKIAGQVAKGAIFYGMLRMDTNKKIVFDMNEWLKLDGESGPFVQYSYARISSLGRKFPRTAGAKIDWSRLNHASERQLMQSLGGFNTAVAAAAENFKPSAICTYLYDLAKSFNVFYHECPIGTEADVATREARLALSEAVGLTLKNGLAVLGMPAPEKM.

The 'HIGH' region signature appears at Pro-127–His-137.

The protein belongs to the class-I aminoacyl-tRNA synthetase family. Monomer.

The protein localises to the cytoplasm. It catalyses the reaction tRNA(Arg) + L-arginine + ATP = L-arginyl-tRNA(Arg) + AMP + diphosphate. The chain is Arginine--tRNA ligase from Bdellovibrio bacteriovorus (strain ATCC 15356 / DSM 50701 / NCIMB 9529 / HD100).